Consider the following 637-residue polypeptide: Early transcription factor 70 kDa subunit (637 aa).

It belongs to the helicase family. VETF subfamily. Heterodimer of a 70 kDa and a 82 kDa subunit. Part of the early transcription complex composed of ETF, RAP94/OPG109, and the DNA-directed RNA polymerase. Apparently non-glycosylated.

The protein resides in the virion. In terms of biological role, acts with RNA polymerase to initiate transcription from early gene promoters. Is recruited by the RPO-associated protein of 94 kDa RAP94/OPG109 to form the early transcription complex, which also contains the core RNA polymerase. ETF heterodimer binds to early gene promoters. This is Early transcription factor 70 kDa subunit (OPG118) from Monkeypox virus.